Reading from the N-terminus, the 158-residue chain is Phosphopantetheine adenylyltransferase (158 aa).

Threonine 10 contacts substrate. Residues 10-11 (TF) and histidine 18 contribute to the ATP site. Lysine 42, leucine 74, and arginine 88 together coordinate substrate. Residues 89 to 91 (GIR), glutamate 99, and 124 to 130 (WRYLSST) contribute to the ATP site.

It belongs to the bacterial CoaD family. Homohexamer. Requires Mg(2+) as cofactor.

It is found in the cytoplasm. It catalyses the reaction (R)-4'-phosphopantetheine + ATP + H(+) = 3'-dephospho-CoA + diphosphate. It functions in the pathway cofactor biosynthesis; coenzyme A biosynthesis; CoA from (R)-pantothenate: step 4/5. In terms of biological role, reversibly transfers an adenylyl group from ATP to 4'-phosphopantetheine, yielding dephospho-CoA (dPCoA) and pyrophosphate. The sequence is that of Phosphopantetheine adenylyltransferase from Actinobacillus pleuropneumoniae serotype 3 (strain JL03).